The primary structure comprises 333 residues: Fructose-1,6-bisphosphatase class 1 1 (333 aa).

Mg(2+)-binding residues include Glu-81, Asp-100, Leu-102, and Asp-103. Substrate-binding positions include 103–106 and Asn-191; that span reads DGSS. Glu-263 is a Mg(2+) binding site.

This sequence belongs to the FBPase class 1 family. Homotetramer. The cofactor is Mg(2+).

The protein resides in the cytoplasm. It carries out the reaction beta-D-fructose 1,6-bisphosphate + H2O = beta-D-fructose 6-phosphate + phosphate. The protein operates within carbohydrate biosynthesis; gluconeogenesis. With respect to regulation, fructose-1,6-bisphosphatase II is not light-activated. The polypeptide is Fructose-1,6-bisphosphatase class 1 1 (Cereibacter sphaeroides (Rhodobacter sphaeroides)).